A 207-amino-acid chain; its full sequence is MNLKLLCAVSWNKDNKCADTDEWLKAIVEDGGYFYRNNRTHQNIDSRSRKWVGLPLENFIGKLVDERNELKGLLKDVNALERSHAKALQNILKLFINTTYGVLGSPYFVVSNTVLANNRTAKAPMGAWMINKALHTRQSITDGGGGLTTIPYLKSEANNPGLGILSDISKWYNSKRGHYQTSLSNIDWKKQYLKSMICQVKRQKYNS.

It is found in the mitochondrion. This is an uncharacterized protein from Marchantia polymorpha (Common liverwort).